Consider the following 481-residue polypeptide: Cysteine--tRNA ligase (481 aa).

Residue C27 participates in Zn(2+) binding. The short motif at 29-39 is the 'HIGH' region element; that stretch reads PTVYNYAHIGN. Positions 222, 247, and 251 each coordinate Zn(2+). A 'KMSKS' region motif is present at residues 279–283; sequence KMSKS. An ATP-binding site is contributed by K282.

The protein belongs to the class-I aminoacyl-tRNA synthetase family. Monomer. The cofactor is Zn(2+).

The protein resides in the cytoplasm. The enzyme catalyses tRNA(Cys) + L-cysteine + ATP = L-cysteinyl-tRNA(Cys) + AMP + diphosphate. This is Cysteine--tRNA ligase from Borrelia turicatae (strain 91E135).